The chain runs to 306 residues: uncharacterized protein (306 aa).

To M.jannaschii MJ0658.

This is an uncharacterized protein from Methanothermobacter thermautotrophicus (strain ATCC 29096 / DSM 1053 / JCM 10044 / NBRC 100330 / Delta H) (Methanobacterium thermoautotrophicum).